Here is a 166-residue protein sequence, read N- to C-terminus: Lipoprotein signal peptidase (166 aa).

The next 3 helical transmembrane spans lie at 12-32 (WLWL…LILQ), 70-90 (WFFA…MYRS), and 102-122 (ALII…GFVV). Residues Asp-123 and Asp-141 contribute to the active site. Residues 137-157 (FNLADSAICIGAALIVLEGFL) form a helical membrane-spanning segment.

This sequence belongs to the peptidase A8 family.

The protein resides in the cell inner membrane. The catalysed reaction is Release of signal peptides from bacterial membrane prolipoproteins. Hydrolyzes -Xaa-Yaa-Zaa-|-(S,diacylglyceryl)Cys-, in which Xaa is hydrophobic (preferably Leu), and Yaa (Ala or Ser) and Zaa (Gly or Ala) have small, neutral side chains.. It functions in the pathway protein modification; lipoprotein biosynthesis (signal peptide cleavage). Its function is as follows. This protein specifically catalyzes the removal of signal peptides from prolipoproteins. This Salmonella choleraesuis (strain SC-B67) protein is Lipoprotein signal peptidase.